The primary structure comprises 420 residues: MVDRWYNIAADLPGVLAPPKDPDEGESRIALLTRILPSALIDQEFTAERWVPIPEEVREVYRRVGRPTPLLRAEGFERALGTKVHIYYKYEGVLPVGSHKLNTAVAQAYYAKADGAVEVATETGAGQWGMAVSLAAALFGLKATVFMTRSSYNSKRQRLVFMRAYGATVYPSPSEVTETGRRHFRPDHPGSLGIAISEAVEYVLSGERRKYLPGSVMEFVLLHQTVIGLEAMRQLPEEPDYAVACVGGGSNFGGFTYPMLGAKLRGEGFGKTKFLAVESAAAPKLTRGEYRYDFPDATGILPLIKMYTLGHDYVPPPVHAAGLRYHGAAPSLSLLKRLGHVEAVAYGQEEVMEAALLFARSEGVLPAPESAHAVRAVIYLAKKLPPGSVVVFNMSGHGLLDVDAYEKALEWEKIYKHPED.

Lys-100 bears the N6-(pyridoxal phosphate)lysine mark.

This sequence belongs to the TrpB family. In terms of assembly, tetramer of two alpha and two beta chains. Pyridoxal 5'-phosphate is required as a cofactor.

It carries out the reaction (1S,2R)-1-C-(indol-3-yl)glycerol 3-phosphate + L-serine = D-glyceraldehyde 3-phosphate + L-tryptophan + H2O. It functions in the pathway amino-acid biosynthesis; L-tryptophan biosynthesis; L-tryptophan from chorismate: step 5/5. The beta subunit is responsible for the synthesis of L-tryptophan from indole and L-serine. The sequence is that of Tryptophan synthase beta chain from Pyrobaculum islandicum (strain DSM 4184 / JCM 9189 / GEO3).